The primary structure comprises 129 residues: Small ribosomal subunit protein uS11 (129 aa).

It belongs to the universal ribosomal protein uS11 family. Part of the 30S ribosomal subunit. Interacts with proteins S7 and S18. Binds to IF-3.

Functionally, located on the platform of the 30S subunit, it bridges several disparate RNA helices of the 16S rRNA. Forms part of the Shine-Dalgarno cleft in the 70S ribosome. In Haemophilus influenzae (strain ATCC 51907 / DSM 11121 / KW20 / Rd), this protein is Small ribosomal subunit protein uS11.